The following is a 387-amino-acid chain: Dual-specificity RNA methyltransferase RlmN (387 aa).

Glutamate 110 functions as the Proton acceptor in the catalytic mechanism. Residues valine 117–arginine 349 enclose the Radical SAM core domain. An intrachain disulfide couples cysteine 124 to cysteine 360. Cysteine 131, cysteine 135, and cysteine 138 together coordinate [4Fe-4S] cluster. S-adenosyl-L-methionine is bound by residues glycine 186–glutamate 187, serine 218, serine 240–histidine 242, and asparagine 317. Cysteine 360 functions as the S-methylcysteine intermediate in the catalytic mechanism.

This sequence belongs to the radical SAM superfamily. RlmN family. It depends on [4Fe-4S] cluster as a cofactor.

Its subcellular location is the cytoplasm. The enzyme catalyses adenosine(2503) in 23S rRNA + 2 reduced [2Fe-2S]-[ferredoxin] + 2 S-adenosyl-L-methionine = 2-methyladenosine(2503) in 23S rRNA + 5'-deoxyadenosine + L-methionine + 2 oxidized [2Fe-2S]-[ferredoxin] + S-adenosyl-L-homocysteine. The catalysed reaction is adenosine(37) in tRNA + 2 reduced [2Fe-2S]-[ferredoxin] + 2 S-adenosyl-L-methionine = 2-methyladenosine(37) in tRNA + 5'-deoxyadenosine + L-methionine + 2 oxidized [2Fe-2S]-[ferredoxin] + S-adenosyl-L-homocysteine. Functionally, specifically methylates position 2 of adenine 2503 in 23S rRNA and position 2 of adenine 37 in tRNAs. m2A2503 modification seems to play a crucial role in the proofreading step occurring at the peptidyl transferase center and thus would serve to optimize ribosomal fidelity. This chain is Dual-specificity RNA methyltransferase RlmN, found in Hyphomonas neptunium (strain ATCC 15444).